The sequence spans 146 residues: Hemoglobin subunit beta-1 (146 aa).

The 145-residue stretch at 2–146 folds into the Globin domain; it reads KWTDKERAVI…VVSALGKQYC (145 aa). Residues His63 and His92 each contribute to the heme b site.

It belongs to the globin family. As to quaternary structure, heterotetramer of two alpha chains and two beta chains. Red blood cells.

In terms of biological role, involved in oxygen transport from gills to the various peripheral tissues. In Lycodes reticulatus (Arctic eelpout), this protein is Hemoglobin subunit beta-1.